Consider the following 337-residue polypeptide: Protein-glutamate methylesterase/protein-glutamine glutaminase of group 3 operon (337 aa).

In terms of domain architecture, Response regulatory spans 2 to 119 (KIAIVNDMPL…GDAREAAAPL (118 aa)). 4-aspartylphosphate is present on Asp-53. In terms of domain architecture, CheB-type methylesterase spans 144-337 (PLREASQRRG…AGRLTEFFAK (194 aa)). Catalysis depends on residues Ser-160, His-187, and Asp-280.

It belongs to the CheB family. Post-translationally, phosphorylated by CheA. Phosphorylation of the N-terminal regulatory domain activates the methylesterase activity.

Its subcellular location is the cytoplasm. The catalysed reaction is [protein]-L-glutamate 5-O-methyl ester + H2O = L-glutamyl-[protein] + methanol + H(+). It carries out the reaction L-glutaminyl-[protein] + H2O = L-glutamyl-[protein] + NH4(+). Its function is as follows. Involved in chemotaxis. Part of a chemotaxis signal transduction system that modulates chemotaxis in response to various stimuli. Catalyzes the demethylation of specific methylglutamate residues introduced into the chemoreceptors (methyl-accepting chemotaxis proteins or MCP) by CheR. Also mediates the irreversible deamidation of specific glutamine residues to glutamic acid. The polypeptide is Protein-glutamate methylesterase/protein-glutamine glutaminase of group 3 operon (Pseudomonas putida (strain ATCC 47054 / DSM 6125 / CFBP 8728 / NCIMB 11950 / KT2440)).